The following is a 507-amino-acid chain: Sugar transport protein 8 (507 aa).

The Cytoplasmic segment spans residues 1–21 (MAVVISSNGNSKSFDAKMTVY). 12 consecutive transmembrane segments (helical) span residues 22-42 (VFIC…DIGI), 79-99 (FLQL…FFAS), 116-136 (IFFL…MLII), 139-159 (ILLG…LSEI), 166-186 (GGLN…ANIV), 200-220 (IALG…LLIC), 281-301 (FVIG…AIMF), 319-339 (LSAV…IFLV), 346-366 (FLLL…GIIL), 382-402 (LVVV…WGPL), 419-439 (GFAL…QAFL), and 448-468 (GIFF…LFFV). Over 469–507 (PETKGVSIDDMRDSVWKLHWYWKRFMLEEDEHDVEKRTD) the chain is Cytoplasmic.

This sequence belongs to the major facilitator superfamily. Sugar transporter (TC 2.A.1.1) family.

It is found in the membrane. Mediates an active uptake of hexoses, probably by sugar/hydrogen symport. This chain is Sugar transport protein 8 (STP8), found in Arabidopsis thaliana (Mouse-ear cress).